The sequence spans 349 residues: Protein-glutamate methylesterase/protein-glutamine glutaminase 2 (349 aa).

A Response regulatory domain is found at 4–121; the sequence is SVLVVDDSAL…AEGMQAYAEE (118 aa). 4-aspartylphosphate is present on Asp-55. A CheB-type methylesterase domain is found at 151 to 343; sequence LLSTEKIIAL…AALLQQAARR (193 aa). Active-site residues include Ser-163, His-189, and Asp-285.

The protein belongs to the CheB family. Interacts with the C-terminal pentapeptide GWEEF of McpB. Phosphorylated by CheA. Phosphorylation of the N-terminal regulatory domain activates the methylesterase activity.

The protein localises to the cytoplasm. The enzyme catalyses [protein]-L-glutamate 5-O-methyl ester + H2O = L-glutamyl-[protein] + methanol + H(+). It catalyses the reaction L-glutaminyl-[protein] + H2O = L-glutamyl-[protein] + NH4(+). In terms of biological role, involved in chemotaxis. Part of a chemotaxis signal transduction system that modulates chemotaxis in response to various stimuli. Catalyzes the demethylation of specific methylglutamate residues introduced into the chemoreceptors (methyl-accepting chemotaxis proteins or MCP) by CheR. Also mediates the irreversible deamidation of specific glutamine residues to glutamic acid. Acts on the methyl-accepting chemotaxis protein McpB. May be involved in a specific chemotactic response, which takes place during infection and is required for P.aeruginosa pathogenicity. The polypeptide is Protein-glutamate methylesterase/protein-glutamine glutaminase 2 (Pseudomonas aeruginosa (strain ATCC 15692 / DSM 22644 / CIP 104116 / JCM 14847 / LMG 12228 / 1C / PRS 101 / PAO1)).